A 41-amino-acid polypeptide reads, in one-letter code: Large ribosomal subunit protein bL32c (41 aa).

The protein belongs to the bacterial ribosomal protein bL32 family.

Its subcellular location is the plastid. This Helicosporidium sp. subsp. Simulium jonesii (Green alga) protein is Large ribosomal subunit protein bL32c (rpl32).